The following is a 631-amino-acid chain: Phosphomethylpyrimidine synthase (631 aa).

Residues Asn239, Met268, Tyr297, His333, 353 to 355 (SRG), 394 to 397 (DGLR), and Glu433 contribute to the substrate site. Zn(2+) is bound at residue His437. Tyr460 serves as a coordination point for substrate. Residue His501 participates in Zn(2+) binding. Residues Cys581, Cys584, and Cys589 each contribute to the [4Fe-4S] cluster site.

The protein belongs to the ThiC family. As to quaternary structure, homodimer. [4Fe-4S] cluster serves as cofactor.

It catalyses the reaction 5-amino-1-(5-phospho-beta-D-ribosyl)imidazole + S-adenosyl-L-methionine = 4-amino-2-methyl-5-(phosphooxymethyl)pyrimidine + CO + 5'-deoxyadenosine + formate + L-methionine + 3 H(+). It participates in cofactor biosynthesis; thiamine diphosphate biosynthesis. Its function is as follows. Catalyzes the synthesis of the hydroxymethylpyrimidine phosphate (HMP-P) moiety of thiamine from aminoimidazole ribotide (AIR) in a radical S-adenosyl-L-methionine (SAM)-dependent reaction. This is Phosphomethylpyrimidine synthase from Salmonella dublin (strain CT_02021853).